Here is a 150-residue protein sequence, read N- to C-terminus: Probable cyclase FGR4 (150 aa).

It functions in the pathway secondary metabolite biosynthesis. Its function is as follows. Probable cyclase; part of the gene cluster that mediates the biosynthesis of the tetraketides fugralins such as linear fugralin A and cyclic fugralin B, volatile compounds that play a role in the asexual reproductive cycle but are not involved in pathogenicity. Fugralin B is similar to fugralin A except for a cyclization between the carboxylic acid C-8 and the alcohol on C-4 resulting in a six membered lactone ring, probably catalyzed by the cyclase FGR4. One of the key features of fugralins is the presence of a double methyl group, which is only rarely encountered in fungal secondary metabolites. As the fugralins cluster does not contain an independent methyltransferase, the PKS FGR1 is probably responsible for adding two methyl groups to the same carbon atom. The exact role of the individual cluster genes remains unknown and further work is needed to unravel the biosynthetic pathway. In Gibberella zeae (strain ATCC MYA-4620 / CBS 123657 / FGSC 9075 / NRRL 31084 / PH-1) (Wheat head blight fungus), this protein is Probable cyclase FGR4.